The sequence spans 145 residues: Basic phospholipase A2 PC10 (145 aa).

Positions 1–21 are cleaved as a signal peptide; it reads MYPAHLLLLLAVCVSLLGASA. Residues 22 to 27 constitute a propeptide that is removed on maturation; that stretch reads IPPLPL. Cystine bridges form between Cys38–Cys98, Cys54–Cys144, Cys56–Cys72, Cys71–Cys125, Cys78–Cys118, Cys87–Cys111, and Cys105–Cys116. Ca(2+)-binding residues include Tyr55, Gly57, and Gly59. Residue His75 is part of the active site. Asp76 contributes to the Ca(2+) binding site. Residue Asp119 is part of the active site.

The protein belongs to the phospholipase A2 family. Group I subfamily. D49 sub-subfamily. The cofactor is Ca(2+).

Its subcellular location is the secreted. It catalyses the reaction a 1,2-diacyl-sn-glycero-3-phosphocholine + H2O = a 1-acyl-sn-glycero-3-phosphocholine + a fatty acid + H(+). Functionally, PLA2 catalyzes the calcium-dependent hydrolysis of the 2-acyl groups in 3-sn-phosphoglycerides. This is Basic phospholipase A2 PC10 from Laticauda laticaudata (Blue-ringed sea krait).